The chain runs to 442 residues: Serine hydroxymethyltransferase (442 aa).

Pyridoxal 5'-phosphate is bound by residues Tyr-54, 100 to 102, and His-236; that span reads SGS. Residues Cys-125 and Cys-364 are joined by a disulfide bond. Lys-237 is subject to N6-(pyridoxal phosphate)lysine. A pyridoxal 5'-phosphate-binding site is contributed by Gly-272.

It belongs to the SHMT family. Homodimer. The cofactor is pyridoxal 5'-phosphate.

The protein localises to the cytoplasm. The protein resides in the mitochondrion matrix. Its subcellular location is the plastid. It localises to the apicoplast. It is found in the nucleus. The catalysed reaction is (6R)-5,10-methylene-5,6,7,8-tetrahydrofolate + glycine + H2O = (6S)-5,6,7,8-tetrahydrofolate + L-serine. Its pathway is one-carbon metabolism; tetrahydrofolate interconversion. With respect to regulation, redox regulation; active in reducing conditions, inactive in oxidizing conditions. The reduction of the cysteine pairs allows the access binding of the tetrahydrofolate substrate to its binding site. This mechanism appears to be unique to Plasmodium species. Functionally, catalyzes the interconversion of serine to glycine accompanied with the production of 5,10-methylenetetrahydrofolate, a source of one-carbon units used by thymidylate synthase to convert dUMP to dTMP for DNA synthesis. Binds to its own mRNA and to the mRNA of bifunctional dihydrofolate reductase-thymidylate synthase (DHFR-TS) in vitro; the physiological relevance of this interaction is not clear. This chain is Serine hydroxymethyltransferase, found in Plasmodium falciparum (isolate 3D7).